The chain runs to 404 residues: Probable tRNA sulfurtransferase (404 aa).

Positions 60–165 (EPVAEALKNV…DEAAYISHEE (106 aa)) constitute a THUMP domain. ATP is bound by residues 183–184 (ML), 208–209 (HF), R265, G287, and Q296.

The protein belongs to the ThiI family.

It localises to the cytoplasm. The catalysed reaction is [ThiI sulfur-carrier protein]-S-sulfanyl-L-cysteine + a uridine in tRNA + 2 reduced [2Fe-2S]-[ferredoxin] + ATP + H(+) = [ThiI sulfur-carrier protein]-L-cysteine + a 4-thiouridine in tRNA + 2 oxidized [2Fe-2S]-[ferredoxin] + AMP + diphosphate. The enzyme catalyses [ThiS sulfur-carrier protein]-C-terminal Gly-Gly-AMP + S-sulfanyl-L-cysteinyl-[cysteine desulfurase] + AH2 = [ThiS sulfur-carrier protein]-C-terminal-Gly-aminoethanethioate + L-cysteinyl-[cysteine desulfurase] + A + AMP + 2 H(+). It functions in the pathway cofactor biosynthesis; thiamine diphosphate biosynthesis. In terms of biological role, catalyzes the ATP-dependent transfer of a sulfur to tRNA to produce 4-thiouridine in position 8 of tRNAs, which functions as a near-UV photosensor. Also catalyzes the transfer of sulfur to the sulfur carrier protein ThiS, forming ThiS-thiocarboxylate. This is a step in the synthesis of thiazole, in the thiamine biosynthesis pathway. The sulfur is donated as persulfide by IscS. This chain is Probable tRNA sulfurtransferase, found in Streptococcus uberis (strain ATCC BAA-854 / 0140J).